The chain runs to 546 residues: Light-independent protochlorophyllide reductase subunit B (546 aa).

A [4Fe-4S] cluster-binding site is contributed by D36. D287 functions as the Proton donor in the catalytic mechanism. Residue 422–423 participates in substrate binding; that stretch reads GL. The segment at 443–501 is disordered; it reads PSHLSAHRPTGEAVGDAVGEPPAAPRDQAAPAATLDGSAAQSDPARTTPPGAPSWEDSA.

This sequence belongs to the ChlB/BchB/BchZ family. As to quaternary structure, protochlorophyllide reductase is composed of three subunits; BchL, BchN and BchB. Forms a heterotetramer of two BchB and two BchN subunits. Requires [4Fe-4S] cluster as cofactor.

The catalysed reaction is chlorophyllide a + oxidized 2[4Fe-4S]-[ferredoxin] + 2 ADP + 2 phosphate = protochlorophyllide a + reduced 2[4Fe-4S]-[ferredoxin] + 2 ATP + 2 H2O. It participates in porphyrin-containing compound metabolism; bacteriochlorophyll biosynthesis (light-independent). Functionally, component of the dark-operative protochlorophyllide reductase (DPOR) that uses Mg-ATP and reduced ferredoxin to reduce ring D of protochlorophyllide (Pchlide) to form chlorophyllide a (Chlide). This reaction is light-independent. The NB-protein (BchN-BchB) is the catalytic component of the complex. The protein is Light-independent protochlorophyllide reductase subunit B of Rhodospirillum rubrum (strain ATCC 11170 / ATH 1.1.1 / DSM 467 / LMG 4362 / NCIMB 8255 / S1).